A 468-amino-acid chain; its full sequence is UDP-N-acetylmuramate--L-alanine ligase (468 aa).

114–120 (GTHGKTT) serves as a coordination point for ATP.

This sequence belongs to the MurCDEF family.

The protein resides in the cytoplasm. It catalyses the reaction UDP-N-acetyl-alpha-D-muramate + L-alanine + ATP = UDP-N-acetyl-alpha-D-muramoyl-L-alanine + ADP + phosphate + H(+). The protein operates within cell wall biogenesis; peptidoglycan biosynthesis. Its function is as follows. Cell wall formation. This chain is UDP-N-acetylmuramate--L-alanine ligase, found in Methylobacterium radiotolerans (strain ATCC 27329 / DSM 1819 / JCM 2831 / NBRC 15690 / NCIMB 10815 / 0-1).